Consider the following 339-residue polypeptide: NADH-quinone oxidoreductase subunit H (339 aa).

Helical transmembrane passes span Phe10–Val30, Pro50–Phe70, Ile82–Val102, Val115–Gly135, Met161–Ile181, Ile187–Leu207, Met235–Thr255, Ile275–Ile295, and Leu310–Leu330.

Belongs to the complex I subunit 1 family. In terms of assembly, NDH-1 is composed of 14 different subunits. Subunits NuoA, H, J, K, L, M, N constitute the membrane sector of the complex.

It is found in the cell inner membrane. It catalyses the reaction a quinone + NADH + 5 H(+)(in) = a quinol + NAD(+) + 4 H(+)(out). NDH-1 shuttles electrons from NADH, via FMN and iron-sulfur (Fe-S) centers, to quinones in the respiratory chain. The immediate electron acceptor for the enzyme in this species is believed to be ubiquinone. Couples the redox reaction to proton translocation (for every two electrons transferred, four hydrogen ions are translocated across the cytoplasmic membrane), and thus conserves the redox energy in a proton gradient. This subunit may bind ubiquinone. In Rickettsia canadensis (strain McKiel), this protein is NADH-quinone oxidoreductase subunit H.